Reading from the N-terminus, the 1145-residue chain is Trafficking protein particle complex subunit 10 (1145 aa).

The protein belongs to the TMEM1 family. Part of the multisubunit TRAPP (transport protein particle) complex. Interacts with Shal (via C-terminal dendritic targeting motif). Co-expressed with Shal in the nervous system.

The protein resides in the golgi apparatus. The protein localises to the cis-Golgi network. It is found in the cell projection. It localises to the dendrite. Its subcellular location is the perikaryon. May play a role in vesicular transport from endoplasmic reticulum to Golgi. Has a role in one of the several mechanisms underlying dendritic localization of Shal channels. The chain is Trafficking protein particle complex subunit 10 (SIDL) from Drosophila melanogaster (Fruit fly).